Reading from the N-terminus, the 481-residue chain is UDP-glycosyltransferase 88F4 (481 aa).

UDP-alpha-D-glucose is bound by residues Ser288, 357 to 358 (WA), 375 to 383 (HCGWNSVLE), and 397 to 400 (YAEQ).

This sequence belongs to the UDP-glycosyltransferase family.

In terms of biological role, glycosyltransferase that may possess chalcone and dihydrochalcone 2'-O-glucosyltransferase activity. In Malus domestica (Apple), this protein is UDP-glycosyltransferase 88F4.